The primary structure comprises 35 residues: Photosystem II reaction center protein T (35 aa).

The chain crosses the membrane as a helical span at residues 3-23; the sequence is ALVYTFLLISTLGIIFFAIFF.

The protein belongs to the PsbT family. In terms of assembly, PSII is composed of 1 copy each of membrane proteins PsbA, PsbB, PsbC, PsbD, PsbE, PsbF, PsbH, PsbI, PsbJ, PsbK, PsbL, PsbM, PsbT, PsbY, PsbZ, Psb30/Ycf12, at least 3 peripheral proteins of the oxygen-evolving complex and a large number of cofactors. It forms dimeric complexes.

Its subcellular location is the plastid. It is found in the chloroplast thylakoid membrane. Its function is as follows. Found at the monomer-monomer interface of the photosystem II (PS II) dimer, plays a role in assembly and dimerization of PSII. PSII is a light-driven water plastoquinone oxidoreductase, using light energy to abstract electrons from H(2)O, generating a proton gradient subsequently used for ATP formation. The chain is Photosystem II reaction center protein T from Aristolochia macrophylla (Dutchman's pipe vine).